Consider the following 111-residue polypeptide: Small ribosomal subunit protein uS15c (111 aa).

This sequence belongs to the universal ribosomal protein uS15 family. Part of the 30S ribosomal subunit.

It localises to the plastid. The protein localises to the chloroplast. The polypeptide is Small ribosomal subunit protein uS15c (rps15) (Staurastrum punctulatum (Green alga)).